The primary structure comprises 284 residues: RNase adapter protein RapZ (284 aa).

8 to 15 (GRSGSGKS) contributes to the ATP binding site. 56-59 (DVRN) is a binding site for GTP. An RNA-binding region spans residues 266 to 284 (RSRGKNVQSRHRTLEKRKS).

This sequence belongs to the RapZ-like family. RapZ subfamily. Homotrimer.

Modulates the synthesis of GlmS, by affecting the processing and stability of the regulatory small RNA GlmZ. When glucosamine-6-phosphate (GlcN6P) concentrations are high in the cell, RapZ binds GlmZ and targets it to cleavage by RNase E. Consequently, GlmZ is inactivated and unable to activate GlmS synthesis. Under low GlcN6P concentrations, RapZ is sequestered and inactivated by an other regulatory small RNA, GlmY, preventing GlmZ degradation and leading to synthesis of GlmS. This is RNase adapter protein RapZ from Cronobacter sakazakii (strain ATCC BAA-894) (Enterobacter sakazakii).